A 118-amino-acid chain; its full sequence is MARIAGINIPDHKHTVIALTSIYGIGKTRSQHICAATGIAEHVKISELSEEQIDTLREAVTKFVVEGDLRREVTLSIKRLMDLGTYRGLRHRRGLPVRGQRTKTNARTRKGPRKPIKK.

Residues 91–118 (HRRGLPVRGQRTKTNARTRKGPRKPIKK) are disordered.

It belongs to the universal ribosomal protein uS13 family. In terms of assembly, part of the 30S ribosomal subunit. Forms a loose heterodimer with protein S19. Forms two bridges to the 50S subunit in the 70S ribosome.

In terms of biological role, located at the top of the head of the 30S subunit, it contacts several helices of the 16S rRNA. In the 70S ribosome it contacts the 23S rRNA (bridge B1a) and protein L5 of the 50S subunit (bridge B1b), connecting the 2 subunits; these bridges are implicated in subunit movement. Contacts the tRNAs in the A and P-sites. This is Small ribosomal subunit protein uS13 from Sodalis glossinidius (strain morsitans).